A 390-amino-acid chain; its full sequence is 4-hydroxycoumarin synthase 1 (390 aa).

The active site involves Cys161.

The protein belongs to the thiolase-like superfamily. Chalcone/stilbene synthases family. In terms of assembly, homodimer.

The catalysed reaction is 2-hydroxybenzoyl-CoA + malonyl-CoA = 4-hydroxycoumarin + CO2 + 2 CoA. Functionally, type III polyketide synthase involved preferentially in the biosynthesis of 4-hydroxycoumarin from salicoyl-CoA. Can also use benzoyl-CoA and malonyl-CoA to produce 3,5-dihydroxybiphenyl as a major product and benzoyldiacetic acid lactone as a minor side product. Can also use m-hydroxybenzoyl-CoA as substrate, producing m-hydroxybenzoyl diacetic acid lactone as a derailment product. No activity with p-hydroxybenzoyl-CoA, CoA-linked cinnamic acids or acetyl-CoA. The protein is 4-hydroxycoumarin synthase 1 (BIS2) of Sorbus aucuparia (European mountain ash).